Consider the following 562-residue polypeptide: Oxygen-dependent choline dehydrogenase (562 aa).

FAD is bound at residue 4–33 (DYIIIGAGSAGNVLATRLTEDPNTTVLLLE). Histidine 473 (proton acceptor) is an active-site residue.

The protein belongs to the GMC oxidoreductase family. FAD serves as cofactor.

The catalysed reaction is choline + A = betaine aldehyde + AH2. It carries out the reaction betaine aldehyde + NAD(+) + H2O = glycine betaine + NADH + 2 H(+). It participates in amine and polyamine biosynthesis; betaine biosynthesis via choline pathway; betaine aldehyde from choline (cytochrome c reductase route): step 1/1. In terms of biological role, involved in the biosynthesis of the osmoprotectant glycine betaine. Catalyzes the oxidation of choline to betaine aldehyde and betaine aldehyde to glycine betaine at the same rate. The sequence is that of Oxygen-dependent choline dehydrogenase from Escherichia coli O45:K1 (strain S88 / ExPEC).